A 511-amino-acid chain; its full sequence is MKQGSRSEGARGDIRGYIQKTGERNLYRIKKGLVPNMNVEGHMYVNDKLKHLIDDEIEMYQLNRNSTFLPAVVQIANVSTLPGIVKASIALPDVHAGYGFSIGNVAAFDMSNEKAIISPGGVGFDINCGVRLIRTNLFYEDIKDKQDELAQLLFNNIPVGVGSQGCILCNQDKLDEALCLGMDWCVKEGYAWVEDKLNCEDNGRSFYADSNYVSVRAKKRGITQMGTLGAGNHYAEIQIVDEIYDKRSAKLMGIEKKNQVCIMIHSGSRGLGHQIATDALIEMEKSMTKYKIDVIDKQLACTPIHSKEGQNYLKAMGSACNFAWINRSSMTFLARQTFAKIFNQSPDDLDMHVIYDISHNIAKMEDHLVDGKMKKLLVHRKGSTRAFPPFHPAVPLDYQYCGQPILIGGTMGTYSYVLTGTDKAMETTFGSTCHGAGRALSRNKSRNTLNYMDVLQKMKEENISIRVASPKLIMEEAPESYKNVSEVVNTCHEAGISNKCFRLKPVAVIKG.

The Mn(2+) site is built by aspartate 125, cysteine 128, histidine 233, histidine 265, and histidine 359. 232–236 (NHYAE) is a GMP binding site. GMP contacts are provided by residues 359 to 360 (HN), 408 to 411 (GGTM), serine 415, 434 to 437 (HGAG), and lysine 510. The active-site GMP-histidine intermediate is histidine 434.

The protein belongs to the RtcB family. In terms of assembly, catalytic component of the tRNA-splicing ligase complex. Mn(2+) is required as a cofactor.

It catalyses the reaction a 3'-end 3'-phospho-ribonucleotide-RNA + a 5'-end dephospho-ribonucleoside-RNA + GTP = a ribonucleotidyl-ribonucleotide-RNA + GMP + diphosphate. The enzyme catalyses a 3'-end 2',3'-cyclophospho-ribonucleotide-RNA + a 5'-end dephospho-ribonucleoside-RNA + GTP + H2O = a ribonucleotidyl-ribonucleotide-RNA + GMP + diphosphate + H(+). Its function is as follows. Catalytic subunit of the tRNA-splicing ligase complex that acts by directly joining spliced tRNA halves to mature-sized tRNAs by incorporating the precursor-derived splice junction phosphate into the mature tRNA as a canonical 3',5'-phosphodiester. May act as an RNA ligase with broad substrate specificity, and may function toward other RNAs. This is RNA-splicing ligase RtcB homolog from Plasmodium knowlesi (strain H).